The following is a 42-amino-acid chain: uncharacterized protein (42 aa).

This is an uncharacterized protein from Saccharomyces cerevisiae (strain ATCC 204508 / S288c) (Baker's yeast).